The following is a 254-amino-acid chain: rRNA N-glycosylase sapovaccarin-S2 (254 aa).

It belongs to the ribosome-inactivating protein family. Type 1 RIP subfamily. Expressed in seeds; most abundant in the perisperm.

It carries out the reaction Endohydrolysis of the N-glycosidic bond at one specific adenosine on the 28S rRNA.. Functionally, exhibits N-glycosylase activity. Catalyzes the release of one adenine from a ribosome. Acts as a ribosome-inactivating protein and inhibits protein synthesis. Induces cell death in Huh-7 liver cells. May contribute to the protection against plant pests and predators or play a role in regulating the death of plant cells. This Gypsophila vaccaria (Cow soapwort) protein is rRNA N-glycosylase sapovaccarin-S2.